An 82-amino-acid chain; its full sequence is Small ribosomal subunit protein bS18 (82 aa).

Residues 1–21 (MKRNNSKKVRVEPTRRPKKNP) form a disordered region.

Belongs to the bacterial ribosomal protein bS18 family. In terms of assembly, part of the 30S ribosomal subunit. Forms a tight heterodimer with protein bS6.

In terms of biological role, binds as a heterodimer with protein bS6 to the central domain of the 16S rRNA, where it helps stabilize the platform of the 30S subunit. This is Small ribosomal subunit protein bS18 from Corynebacterium kroppenstedtii (strain DSM 44385 / JCM 11950 / CIP 105744 / CCUG 35717).